We begin with the raw amino-acid sequence, 677 residues long: UvrABC system protein B (677 aa).

The region spanning 27–192 (ANLGQGVRDQ…QRNDFDFHRG (166 aa)) is the Helicase ATP-binding domain. Residue 40-47 (GVTGSGKT) participates in ATP binding. The short motif at 93–116 (YYDYYQPEAYVPASDTYIEKDSSI) is the Beta-hairpin element. The region spanning 432–594 (QVDDLLAECR…IEPRTIRKSL (163 aa)) is the Helicase C-terminal domain. In terms of domain architecture, UVR spans 638 to 673 (AKHIQKLEREMREAAKELEFERAATLRDRIRLLRER).

Belongs to the UvrB family. Forms a heterotetramer with UvrA during the search for lesions. Interacts with UvrC in an incision complex.

The protein localises to the cytoplasm. The UvrABC repair system catalyzes the recognition and processing of DNA lesions. A damage recognition complex composed of 2 UvrA and 2 UvrB subunits scans DNA for abnormalities. Upon binding of the UvrA(2)B(2) complex to a putative damaged site, the DNA wraps around one UvrB monomer. DNA wrap is dependent on ATP binding by UvrB and probably causes local melting of the DNA helix, facilitating insertion of UvrB beta-hairpin between the DNA strands. Then UvrB probes one DNA strand for the presence of a lesion. If a lesion is found the UvrA subunits dissociate and the UvrB-DNA preincision complex is formed. This complex is subsequently bound by UvrC and the second UvrB is released. If no lesion is found, the DNA wraps around the other UvrB subunit that will check the other stand for damage. The protein is UvrABC system protein B of Nitratidesulfovibrio vulgaris (strain DP4) (Desulfovibrio vulgaris).